A 237-amino-acid chain; its full sequence is uncharacterized protein (237 aa).

The a divalent metal cation site is built by Glu-91, Glu-93, and Asp-122.

It belongs to the FAH family.

This is an uncharacterized protein from Methanocaldococcus jannaschii (strain ATCC 43067 / DSM 2661 / JAL-1 / JCM 10045 / NBRC 100440) (Methanococcus jannaschii).